Consider the following 242-residue polypeptide: Probable septum site-determining protein MinC (242 aa).

It belongs to the MinC family. In terms of assembly, interacts with MinD and FtsZ.

Functionally, cell division inhibitor that blocks the formation of polar Z ring septums. Rapidly oscillates between the poles of the cell to destabilize FtsZ filaments that have formed before they mature into polar Z rings. Prevents FtsZ polymerization. This chain is Probable septum site-determining protein MinC, found in Brucella anthropi (strain ATCC 49188 / DSM 6882 / CCUG 24695 / JCM 21032 / LMG 3331 / NBRC 15819 / NCTC 12168 / Alc 37) (Ochrobactrum anthropi).